Reading from the N-terminus, the 357-residue chain is Peptide chain release factor 1 (357 aa).

Gln-233 is subject to N5-methylglutamine.

It belongs to the prokaryotic/mitochondrial release factor family. Methylated by PrmC. Methylation increases the termination efficiency of RF1.

It is found in the cytoplasm. In terms of biological role, peptide chain release factor 1 directs the termination of translation in response to the peptide chain termination codons UAG and UAA. The sequence is that of Peptide chain release factor 1 from Leuconostoc citreum (strain KM20).